Consider the following 381-residue polypeptide: GDP-mannose transporter (381 aa).

The segment covering 1 to 12 (MSDDKKSDDYRV) has biased composition (basic and acidic residues). The segment at 1-28 (MSDDKKSDDYRVDMPSSRTSRAPSPIMR) is disordered. Residues 1–36 (MSDDKKSDDYRVDMPSSRTSRAPSPIMRPALKSAPS) are Cytoplasmic-facing. The chain crosses the membrane as a helical span at residues 37–57 (LTENPMAAVLAYCASSILMTV). Residues 58–67 (TNKYVLSGVD) lie on the Lumenal side of the membrane. The chain crosses the membrane as a helical span at residues 68 to 88 (FNLNFFLLCVQSVVCVTAISI). Topologically, residues 89–107 (CKAAGLITYRDFNTDEAKK) are cytoplasmic. Residues 108–126 (WFPISLLLIGMIYTGTWAL) traverse the membrane as a helical segment. The Lumenal portion of the chain corresponds to 127 to 130 (KYLS). The helical transmembrane segment at 131-153 (IPVYTIFKNLTIILIAYGEVLWF) threads the bilayer. The Cytoplasmic portion of the chain corresponds to 154–161 (GGSVTPMT). Residues 162 to 184 (LFSFGLMVLSSIIAAWADIQHAL) traverse the membrane as a helical segment. Over 185–199 (NSFGQQSEAANEALS) the chain is Lumenal. The helical transmembrane segment at 200-220 (TMHAGYLWMAFNCVCSATYLL) threads the bilayer. Topologically, residues 221-242 (SMRKRIKLTNFKDYDTMYYNNL) are cytoplasmic. Residues 243-263 (LTIPILLVASILVEDWSSANI) traverse the membrane as a helical segment. Over 264–274 (QKNFPPEQRNT) the chain is Lumenal. A helical transmembrane segment spans residues 275-295 (VIMVMVISGMSTVFISYTSAW). Topologically, residues 296-303 (AVRVTSST) are cytoplasmic. A helical membrane pass occupies residues 304 to 324 (TYSMVGALNKLPIAISGLVFF). Residues 325–327 (DAP) lie on the Lumenal side of the membrane. A helical membrane pass occupies residues 328–348 (VTFGSVSAIFVGFVSGIVYAV). Residues 349 to 381 (AKVRQNSKPKTVLPTTNIPLSASSRSMQDSLKA) lie on the Cytoplasmic side of the membrane.

Belongs to the TPT transporter family. SLC35D subfamily. As to quaternary structure, homooligomer.

The protein resides in the golgi apparatus membrane. The protein localises to the cytoplasmic vesicle membrane. It is found in the endoplasmic reticulum membrane. Its function is as follows. Involved in the import of GDP-mannose from the cytoplasm into the Golgi lumen. The protein is GDP-mannose transporter (VRG4) of Phaeosphaeria nodorum (strain SN15 / ATCC MYA-4574 / FGSC 10173) (Glume blotch fungus).